A 460-amino-acid chain; its full sequence is Argininosuccinate lyase (460 aa).

It belongs to the lyase 1 family. Argininosuccinate lyase subfamily.

Its subcellular location is the cytoplasm. It carries out the reaction 2-(N(omega)-L-arginino)succinate = fumarate + L-arginine. The protein operates within amino-acid biosynthesis; L-arginine biosynthesis; L-arginine from L-ornithine and carbamoyl phosphate: step 3/3. The polypeptide is Argininosuccinate lyase (Leuconostoc mesenteroides subsp. mesenteroides (strain ATCC 8293 / DSM 20343 / BCRC 11652 / CCM 1803 / JCM 6124 / NCDO 523 / NBRC 100496 / NCIMB 8023 / NCTC 12954 / NRRL B-1118 / 37Y)).